Here is a 449-residue protein sequence, read N- to C-terminus: MANVVENLGKLERRVTISLPKDVVQKEIDARIQKLAKNVRMPGFRPGKVPLKMVAQQYAGQVEAEVLSDKIGQEFFTISRAENLRVAGQPSFAPKEDTQQESTYAFDATFEVYPEVKIGDLATAEVERSTTTIGDAEIDRTLDILRKQRVHFHARGEGGEHGDGGADTAAQNGDRVTVDFVGKIDGVAFQGGTAEDFVFVLGEGRMLPEFETAALGLKAGESREFDLKFPDDYHGKDVAGKTAQFTVTLKKVEWPHLPEIDADFAKSLGVEDGDLTKMRAEIKENLEREAKRRTQSIVKNQVMDALLKISELDVPKALIEQDQQRLVEMARQDLAQRGVPNAKDAPIPAEMFADQAERRVKLGLVLAELVKANGLEAKPEQIRAEVDEFAKSYEDPKEVVRWYYSNQQRLAEMEAFVVESNVVDFVLGKAKVTDKEVSFEALASATAQA.

Residues 173–258 (GDRVTVDFVG…LKKVEWPHLP (86 aa)) enclose the PPIase FKBP-type domain.

The protein belongs to the FKBP-type PPIase family. Tig subfamily.

It localises to the cytoplasm. The enzyme catalyses [protein]-peptidylproline (omega=180) = [protein]-peptidylproline (omega=0). Its function is as follows. Involved in protein export. Acts as a chaperone by maintaining the newly synthesized protein in an open conformation. Functions as a peptidyl-prolyl cis-trans isomerase. This Burkholderia pseudomallei (strain 1710b) protein is Trigger factor.